Here is a 174-residue protein sequence, read N- to C-terminus: Co-chaperone protein HscB homolog (174 aa).

The J domain maps to 2–74 (NYFELFSLLP…IQRAEHLLTL (73 aa)).

Belongs to the HscB family. Interacts with HscA and stimulates its ATPase activity.

Co-chaperone involved in the maturation of iron-sulfur cluster-containing proteins. Seems to help targeting proteins to be folded toward HscA. The protein is Co-chaperone protein HscB homolog of Shewanella halifaxensis (strain HAW-EB4).